A 360-amino-acid polypeptide reads, in one-letter code: Decorin (360 aa).

The N-terminal stretch at 1–16 (MTATLILLLLAQVSWA) is a signal peptide. The propeptide occupies 17-30 (GPFQQRGLFDFMLE). O-linked (Xyl...) (glycosaminoglycan) serine glycosylation occurs at serine 34. 2 disulfides stabilise this stretch: cysteine 55–cysteine 61 and cysteine 59–cysteine 68. LRR repeat units lie at residues 74–94 (DKVP…NNKI), 95–118 (TEIK…NNKI), 119–142 (SKIS…KNHL), 143–163 (KELP…ENEI), 164–187 (TKVR…TNPL), 188–213 (KSSG…DTNI), 214–234 (TTIP…GNKI), 235–258 (TKID…FNDI), 259–282 (SAVD…NNKL), 283–305 (IRVP…NNNI), 306–335 (SVVG…SNPV), and 336–360 (QYWE…GNYK). Asparagine 212 is a glycosylation site (N-linked (GlcNAc...) asparagine). Asparagine 263 and asparagine 304 each carry an N-linked (GlcNAc...) asparagine glycan. An intrachain disulfide couples cysteine 314 to cysteine 347.

Belongs to the small leucine-rich proteoglycan (SLRP) family. SLRP class I subfamily. Binds to type I and type II collagen, fibronectin and TGF-beta. Forms a ternary complex with MFAP2 and ELN. Interacts with DPT. The attached glycosaminoglycan chain can be either chondroitin sulfate or dermatan sulfate depending upon the tissue of origin.

Its subcellular location is the secreted. It localises to the extracellular space. The protein resides in the extracellular matrix. In terms of biological role, may affect the rate of fibrils formation. The sequence is that of Decorin (DCN) from Oryctolagus cuniculus (Rabbit).